We begin with the raw amino-acid sequence, 150 residues long: MLLDDLYEIVEPITADLGYILWGIEVVGAGKLTIRIFIDHENGVSVDDCQVVSKEVSAIFDVEDPISDKYVLEVSSPGMNRQIFNIIQAQALVGFNVKAVTLTPVESQTKFKGVLERVEGNNVILKLDDGREVSFDFDELKKFRVSPDFS.

This sequence belongs to the RimP family.

It localises to the cytoplasm. Required for maturation of 30S ribosomal subunits. The protein is Ribosome maturation factor RimP of Francisella philomiragia subsp. philomiragia (strain ATCC 25017 / CCUG 19701 / FSC 153 / O#319-036).